We begin with the raw amino-acid sequence, 108 residues long: UPF0060 membrane protein YnfA (108 aa).

Topologically, residues 1–5 are periplasmic; that stretch reads MLKTT. The helical transmembrane segment at 6 to 26 threads the bilayer; it reads LLFFVTALCEIIGCFLPWLWI. At 27-30 the chain is on the cytoplasmic side; it reads KRGA. A helical membrane pass occupies residues 31-51; the sequence is SVWWLLPAAASLALFVWLLTL. Residues 52–60 lie on the Periplasmic side of the membrane; that stretch reads HPAASGRVY. A helical membrane pass occupies residues 61 to 81; sequence AAYGGVYVCTALLWLRVVDGV. Residues 82 to 84 lie on the Cytoplasmic side of the membrane; sequence RLT. A helical membrane pass occupies residues 85–105; sequence VYDWSGALIALCGMLIIVVGW. The Periplasmic segment spans residues 106–108; it reads GRT.

The protein belongs to the UPF0060 family.

The protein resides in the cell inner membrane. The protein is UPF0060 membrane protein YnfA of Salmonella typhi.